The primary structure comprises 175 residues: Homeobox expressed in ES cells 1 (175 aa).

Positions 1-44 (MSPNLQEGARLVEGKPSSTSFSIESILGLDQKKDDAPSMKPHRP) are disordered. The segment at residues 108–167 (GRRPRTAFTQNQVEVLENVFRVNCYPGIDIREDLARKLNLEEDRIQIWFQNRRAKLKRSH) is a DNA-binding region (homeobox).

It belongs to the ANF homeobox family. As to quaternary structure, interacts with TLE1.

The protein localises to the nucleus. Required for the normal development of the forebrain, eyes and other anterior structures such as the olfactory placodes and pituitary gland. Possible transcriptional repressor. Binds to the palindromic PIII sequence, 5'-AGCTTGAGTCTAATTGAATTAACTGTAC-3'. The chain is Homeobox expressed in ES cells 1 (HESX1) from Oryctolagus cuniculus (Rabbit).